The sequence spans 157 residues: Transcription elongation factor GreB (157 aa).

Residues 52 to 73 are a coiled coil; sequence KKLLREIDRRVRYLRKRLEDMR.

It belongs to the GreA/GreB family. GreB subfamily.

Functionally, necessary for efficient RNA polymerase transcription elongation past template-encoded arresting sites. The arresting sites in DNA have the property of trapping a certain fraction of elongating RNA polymerases that pass through, resulting in locked ternary complexes. Cleavage of the nascent transcript by cleavage factors such as GreA or GreB allows the resumption of elongation from the new 3'terminus. GreB releases sequences of up to 9 nucleotides in length. In Pseudomonas syringae pv. tomato (strain ATCC BAA-871 / DC3000), this protein is Transcription elongation factor GreB.